We begin with the raw amino-acid sequence, 632 residues long: Chaperone protein HtpG (632 aa).

The tract at residues 1–339 (MTQQTMSFQA…SSDLPLNVSR (339 aa)) is a; substrate-binding. A b region spans residues 340–559 (EILQESRDVK…DNDMSGYLQR (220 aa)). The segment at 560 to 632 (MLKAAGQSAP…TNALLLSRAA (73 aa)) is c.

It belongs to the heat shock protein 90 family. Homodimer.

It is found in the cytoplasm. Functionally, molecular chaperone. Has ATPase activity. In Burkholderia mallei (strain NCTC 10247), this protein is Chaperone protein HtpG.